The chain runs to 172 residues: Bifunctional protein PyrR (172 aa).

Residues 90-102 (LVLVDDVLMSGRT) carry the PRPP-binding motif.

The protein belongs to the purine/pyrimidine phosphoribosyltransferase family. PyrR subfamily.

The enzyme catalyses UMP + diphosphate = 5-phospho-alpha-D-ribose 1-diphosphate + uracil. Functionally, regulates the transcription of the pyrimidine nucleotide (pyr) operon in response to exogenous pyrimidines. Its function is as follows. Also displays a weak uracil phosphoribosyltransferase activity which is not physiologically significant. In Pseudomonas putida (strain GB-1), this protein is Bifunctional protein PyrR.